A 304-amino-acid polypeptide reads, in one-letter code: DnaJ homolog subfamily C member 17 (304 aa).

The 66-residue stretch at aspartate 11–arginine 76 folds into the J domain. Over residues lysine 79–glutamine 106 the composition is skewed to basic and acidic residues. The tract at residues lysine 79 to leucine 145 is disordered. The residue at position 112 (serine 112) is a Phosphoserine. The segment covering serine 118 to leucine 145 has biased composition (basic and acidic residues). The region spanning lysine 178–glycine 249 is the RRM domain. An N6-methyllysine modification is found at lysine 264.

The protein localises to the cytoplasm. The protein resides in the nucleus. Its function is as follows. May negatively affect PAX8-induced thyroglobulin/TG transcription. In Homo sapiens (Human), this protein is DnaJ homolog subfamily C member 17 (DNAJC17).